Consider the following 238-residue polypeptide: tRNA (guanine-N(7)-)-methyltransferase (238 aa).

S-adenosyl-L-methionine is bound by residues Glu-70, Asp-95, Asp-122, and Asp-145. Residue Asp-145 is part of the active site. Residues Lys-149, Asp-181, and 216–219 (TKFE) each bind substrate.

This sequence belongs to the class I-like SAM-binding methyltransferase superfamily. TrmB family.

The enzyme catalyses guanosine(46) in tRNA + S-adenosyl-L-methionine = N(7)-methylguanosine(46) in tRNA + S-adenosyl-L-homocysteine. The protein operates within tRNA modification; N(7)-methylguanine-tRNA biosynthesis. In terms of biological role, catalyzes the formation of N(7)-methylguanine at position 46 (m7G46) in tRNA. The sequence is that of tRNA (guanine-N(7)-)-methyltransferase from Neisseria meningitidis serogroup C / serotype 2a (strain ATCC 700532 / DSM 15464 / FAM18).